A 224-amino-acid chain; its full sequence is Deoxyguanosine kinase (224 aa).

8–16 (GPIGAGKSS) serves as a coordination point for ATP. Substrate-binding residues include Glu-32, Tyr-44, and Gln-55. Asp-78 serves as the catalytic Proton acceptor. 3 residues coordinate substrate: Arg-79, Asp-84, and Glu-149.

The protein belongs to the DCK/DGK family. Heterodimer of a deoxyadenosine (DAK) and a deoxyguanosine kinase (DGK).

The catalysed reaction is 2'-deoxyguanosine + ATP = dGMP + ADP + H(+). In terms of biological role, DGK/DAK plays an essential role in generating the deoxyribonucleotide precursors, dGTP and dATP, for DNA metabolism. This chain is Deoxyguanosine kinase, found in Lactobacillus johnsonii (strain CNCM I-12250 / La1 / NCC 533).